We begin with the raw amino-acid sequence, 346 residues long: Sensor histidine kinase GraS (346 aa).

Transmembrane regions (helical) follow at residues 15 to 35 (INWILWILFLNIILLGVAYID) and 43 to 63 (VFYIVILNVGLSILFLLFTFV). The Histidine kinase domain occupies 126-332 (EFVHDIKTPV…TFYFIFPQQN (207 aa)). His-129 is subject to Phosphohistidine; by autocatalysis.

In terms of processing, autophosphorylated.

The protein resides in the cell membrane. It carries out the reaction ATP + protein L-histidine = ADP + protein N-phospho-L-histidine.. Functionally, member of the two-component regulatory system GraR/GraS involved in resistance against cationic antimicrobial peptides (CAMPs). GraS probably functions as a sensor protein kinase which is autophosphorylated at a histidine residue and transfers its phosphate group to GraR. This chain is Sensor histidine kinase GraS (graS), found in Staphylococcus epidermidis (strain ATCC 35984 / DSM 28319 / BCRC 17069 / CCUG 31568 / BM 3577 / RP62A).